The following is a 669-amino-acid chain: Elongation factor G 2 (669 aa).

Residues 1-276 (MSIRNIGIMA…SIVDYLPSPF (276 aa)) enclose the tr-type G domain. Residues 10–17 (AHIDAGKT), 74–78 (DTPGH), and 128–131 (NKMD) each bind GTP.

This sequence belongs to the TRAFAC class translation factor GTPase superfamily. Classic translation factor GTPase family. EF-G/EF-2 subfamily.

It localises to the cytoplasm. Catalyzes the GTP-dependent ribosomal translocation step during translation elongation. During this step, the ribosome changes from the pre-translocational (PRE) to the post-translocational (POST) state as the newly formed A-site-bound peptidyl-tRNA and P-site-bound deacylated tRNA move to the P and E sites, respectively. Catalyzes the coordinated movement of the two tRNA molecules, the mRNA and conformational changes in the ribosome. In Borreliella burgdorferi (strain ATCC 35210 / DSM 4680 / CIP 102532 / B31) (Borrelia burgdorferi), this protein is Elongation factor G 2 (fusB).